A 314-amino-acid polypeptide reads, in one-letter code: Small ribosomal subunit protein uS11m (314 aa).

A mitochondrion-targeting transit peptide spans 1-37 (MNGVSRHLRASSLLSLIRSYGGINSVCRFSSQSDGFS). Residues 34–138 (DGFSGGRFRE…GSGFSAPSLS (105 aa)) are disordered. A compositionally biased stretch (polar residues) spans 50–63 (ESANNSGLSNTGRI). Over residues 103 to 114 (SSLRSRLPNSLP) the composition is skewed to low complexity.

This sequence belongs to the universal ribosomal protein uS11 family. As to quaternary structure, component of the mitochondrial ribosome small subunit (28S) which comprises a 12S rRNA and about 30 distinct proteins.

It localises to the mitochondrion. Required for karyogamy during female gametophyte development, when the two polar nuclei fuse to form the diploid central cell nucleus. In Arabidopsis thaliana (Mouse-ear cress), this protein is Small ribosomal subunit protein uS11m.